We begin with the raw amino-acid sequence, 207 residues long: Probable glutathione S-transferase 5 (207 aa).

In terms of domain architecture, GST N-terminal spans 2-81 (VSYKLTYFNG…FLAREFKLNG (80 aa)). Residues Tyr8, Trp39, Lys43, 51–53 (GQL), and 65–66 (QS) each bind glutathione. One can recognise a GST C-terminal domain in the interval 83–207 (TAWEEAQVNS…WIETRPVTPF (125 aa)).

The protein belongs to the GST superfamily. Sigma family.

It carries out the reaction RX + glutathione = an S-substituted glutathione + a halide anion + H(+). Its function is as follows. Conjugation of reduced glutathione to a wide number of exogenous and endogenous hydrophobic electrophiles. May play a role in the detoxification of reactive oxygen species produced during pathogenic bacterial infection. The polypeptide is Probable glutathione S-transferase 5 (gst-5) (Caenorhabditis elegans).